The following is a 372-amino-acid chain: MDVIRTAIGLMSGTSMDGIDVALIRTDGRGFIERGPFMGVPYDADFRGQLKRALELSRPLTDRSERPAELREIELELTLRHAIAVTAFMERFGLAADAVDVLGFHGQTVLHRPDEGLTIQIGDGGELAKRTAISVVYDMRANDMVHGGQGAPLVPAYHAALAGKFQQAGQAVCFVNIGGISNLTFIGTDGRISAFDSGPGNTLIDQWVEMQTGRTYDPGGEIGGRGKVVASLAERYLQSPFFRGNVRRSLDRGDFAPLQSEEASLEDGARTLAHVAAASIIKSGGFLPETPALYIVCGGGRLNATLMAEFSVMAERLGSRVLTAEEAGFDGDAMEAEAWAYLAVRSLDGLPLTFPGTTGVGAPVTGGVLATP.

13-20 (GTSMDGID) lines the ATP pocket.

Belongs to the anhydro-N-acetylmuramic acid kinase family.

The catalysed reaction is 1,6-anhydro-N-acetyl-beta-muramate + ATP + H2O = N-acetyl-D-muramate 6-phosphate + ADP + H(+). It participates in amino-sugar metabolism; 1,6-anhydro-N-acetylmuramate degradation. The protein operates within cell wall biogenesis; peptidoglycan recycling. In terms of biological role, catalyzes the specific phosphorylation of 1,6-anhydro-N-acetylmuramic acid (anhMurNAc) with the simultaneous cleavage of the 1,6-anhydro ring, generating MurNAc-6-P. Is required for the utilization of anhMurNAc either imported from the medium or derived from its own cell wall murein, and thus plays a role in cell wall recycling. The sequence is that of Anhydro-N-acetylmuramic acid kinase from Rhizobium johnstonii (strain DSM 114642 / LMG 32736 / 3841) (Rhizobium leguminosarum bv. viciae).